The following is a 243-amino-acid chain: Small ribosomal subunit protein uS3 (243 aa).

Positions 38 to 106 (IRKYLNARLA…DIQINIFEVK (69 aa)) constitute a KH type-2 domain. The interval 217–243 (TQTKESGRGGNGNNNGGKNFKRKKNNR) is disordered.

The protein belongs to the universal ribosomal protein uS3 family. Part of the 30S ribosomal subunit. Forms a tight complex with proteins S10 and S14.

Binds the lower part of the 30S subunit head. Binds mRNA in the 70S ribosome, positioning it for translation. The chain is Small ribosomal subunit protein uS3 from Phocaeicola vulgatus (strain ATCC 8482 / DSM 1447 / JCM 5826 / CCUG 4940 / NBRC 14291 / NCTC 11154) (Bacteroides vulgatus).